Consider the following 93-residue polypeptide: Ribonuclease P protein component 4 (93 aa).

Cys55, Cys58, Cys81, and Cys83 together coordinate Zn(2+).

Belongs to the eukaryotic/archaeal RNase P protein component 4 family. In terms of assembly, consists of a catalytic RNA component and at least 4-5 protein subunits. Zn(2+) serves as cofactor.

It is found in the cytoplasm. The catalysed reaction is Endonucleolytic cleavage of RNA, removing 5'-extranucleotides from tRNA precursor.. Part of ribonuclease P, a protein complex that generates mature tRNA molecules by cleaving their 5'-ends. This is Ribonuclease P protein component 4 from Halobacterium salinarum (strain ATCC 29341 / DSM 671 / R1).